Here is a 286-residue protein sequence, read N- to C-terminus: ATP synthase gamma chain (286 aa).

It belongs to the ATPase gamma chain family. F-type ATPases have 2 components, CF(1) - the catalytic core - and CF(0) - the membrane proton channel. CF(1) has five subunits: alpha(3), beta(3), gamma(1), delta(1), epsilon(1). CF(0) has three main subunits: a, b and c.

It localises to the cell inner membrane. Functionally, produces ATP from ADP in the presence of a proton gradient across the membrane. The gamma chain is believed to be important in regulating ATPase activity and the flow of protons through the CF(0) complex. This is ATP synthase gamma chain from Alcanivorax borkumensis (strain ATCC 700651 / DSM 11573 / NCIMB 13689 / SK2).